Consider the following 413-residue polypeptide: Arginine biosynthesis bifunctional protein ArgJ (413 aa).

The substrate site is built by Thr160, Lys186, Thr197, Glu284, Asn408, and Ser413. Thr197 serves as the catalytic Nucleophile.

The protein belongs to the ArgJ family. In terms of assembly, heterotetramer of two alpha and two beta chains.

It is found in the cytoplasm. It carries out the reaction N(2)-acetyl-L-ornithine + L-glutamate = N-acetyl-L-glutamate + L-ornithine. The catalysed reaction is L-glutamate + acetyl-CoA = N-acetyl-L-glutamate + CoA + H(+). It participates in amino-acid biosynthesis; L-arginine biosynthesis; L-ornithine and N-acetyl-L-glutamate from L-glutamate and N(2)-acetyl-L-ornithine (cyclic): step 1/1. Its pathway is amino-acid biosynthesis; L-arginine biosynthesis; N(2)-acetyl-L-ornithine from L-glutamate: step 1/4. In terms of biological role, catalyzes two activities which are involved in the cyclic version of arginine biosynthesis: the synthesis of N-acetylglutamate from glutamate and acetyl-CoA as the acetyl donor, and of ornithine by transacetylation between N(2)-acetylornithine and glutamate. This Burkholderia pseudomallei (strain K96243) protein is Arginine biosynthesis bifunctional protein ArgJ.